Consider the following 287-residue polypeptide: Glutamate racemase (287 aa).

The segment covering Met1–Ala15 has biased composition (polar residues). The segment at Met1–Arg25 is disordered. Substrate-binding positions include Asp32–Ser33 and Tyr64–Gly65. The active-site Proton donor/acceptor is Cys96. A substrate-binding site is contributed by Asn97–Thr98. Cys208 serves as the catalytic Proton donor/acceptor. Residue Thr209 to His210 coordinates substrate.

This sequence belongs to the aspartate/glutamate racemases family.

It catalyses the reaction L-glutamate = D-glutamate. Its pathway is cell wall biogenesis; peptidoglycan biosynthesis. In terms of biological role, provides the (R)-glutamate required for cell wall biosynthesis. This is Glutamate racemase from Yersinia pseudotuberculosis serotype O:3 (strain YPIII).